Reading from the N-terminus, the 583-residue chain is Ankyrin repeat and SOCS box protein 15 (583 aa).

ANK repeat units lie at residues 75-104 (KGWF…KTLW), 110-139 (DGET…WPNT), 143-172 (KGET…SLDQ), 176-205 (KRWS…NVHL), 209-238 (FGVT…DVFA), 242-271 (DGAS…SGNV), 275-304 (AGHL…KHAI), 307-336 (SGLT…DVNA), 349-378 (ERKT…DPNL), 379-408 (DPLN…NVNC), and 416-444 (TRFP…QVEL). The SOCS box domain occupies 524-579 (WPEIRQIIENPCSLKHLCRLKIRRVMGLQRLCQPASIQMLPLPAAMRRYLLFKEFD).

It belongs to the ankyrin SOCS box (ASB) family.

It functions in the pathway protein modification; protein ubiquitination. Its function is as follows. May be a substrate-recognition component of a SCF-like ECS (Elongin-Cullin-SOCS-box protein) E3 ubiquitin-protein ligase complex which mediates the ubiquitination and subsequent proteasomal degradation of target proteins. This is Ankyrin repeat and SOCS box protein 15 (Asb15) from Mus musculus (Mouse).